A 108-amino-acid chain; its full sequence is Type III secretion system chaperone SseA (108 aa).

A coiled-coil region spans residues 69-97 (NQEAEKDLKKIVSLFKQLEVRLKQLNAQA).

In terms of assembly, binds to SseB and SseD.

The protein localises to the cytoplasm. Its function is as follows. Functions as a type III secretion system (T3SS) chaperone, which is required for SseB and SseD accumulation and secretion. May have a direct role in secretion of SseB and SseD, or may facilitate their correct folding, for efficient secretion and function. Required for survival and replication within epithelial cells and macrophages. In Salmonella typhimurium (strain LT2 / SGSC1412 / ATCC 700720), this protein is Type III secretion system chaperone SseA (sseA).